An 859-amino-acid chain; its full sequence is Leucine--tRNA ligase (859 aa).

The 'HIGH' region signature appears at 42 to 52; that stretch reads PYPSGRLHMGH. A 'KMSKS' region motif is present at residues 618-622; sequence KMSKS. Position 621 (lysine 621) interacts with ATP.

The protein belongs to the class-I aminoacyl-tRNA synthetase family.

The protein resides in the cytoplasm. The enzyme catalyses tRNA(Leu) + L-leucine + ATP = L-leucyl-tRNA(Leu) + AMP + diphosphate. The protein is Leucine--tRNA ligase of Shewanella sp. (strain W3-18-1).